The following is a 453-amino-acid chain: Probable L-galactonate transporter (453 aa).

Residues 1 to 23 (MEKENITIDPRSSFTPSSSADIP) form a disordered region. Residues 1 to 42 (MEKENITIDPRSSFTPSSSADIPVPPDGLVQRSTRIKRIQTT) are Periplasmic-facing. Positions 10 to 20 (PRSSFTPSSSA) are enriched in polar residues. The helical transmembrane segment at 43-63 (AMLLLFFAAVINYLDRSSLSV) threads the bilayer. Topologically, residues 64 to 71 (ANLTIREE) are cytoplasmic. A helical transmembrane segment spans residues 72-92 (LGLSATEIGALLSVFSLAYGI). Residues 93–107 (AQLPCGPLLDRKGPR) are Periplasmic-facing. The chain crosses the membrane as a helical span at residues 108-128 (LMLGLGMFFWSLFQAMSGMVH). The Cytoplasmic portion of the chain corresponds to 129 to 174 (NFTQFVLVRIGMGIGEAPMNPCGVKVINDWFNIKERGRPMGFFNAA). Residues 175–195 (STIGVAVSPPILAAMMLVMGW) traverse the membrane as a helical segment. Position 196 (R196) is a topological domain, periplasmic. A helical transmembrane segment spans residues 197-217 (GMFITIGVLGIFLAIGWYMLY). At 218 to 259 (RNREHVELTAVEQAYLNAGSVNARRDPLSFAEWRSLFRNRTM) the chain is on the cytoplasmic side. The chain crosses the membrane as a helical span at residues 260–280 (WGMMLGFSGINYTAWLYLAWL). Topologically, residues 281–295 (PGYLQTAYNLDLKST) are periplasmic. Residues 296-316 (GLMAAIPFLFGAAGMLVNGYV) traverse the membrane as a helical segment. The Cytoplasmic portion of the chain corresponds to 317-332 (TDWLVKGGMAPIKSRK). Residues 333 to 353 (ICIIAGMFCSAAFTLIVPQAT) form a helical membrane-spanning segment. At 354 to 359 (TSMTAV) the chain is on the periplasmic side. A helical membrane pass occupies residues 360–380 (LLIGMALFCIHFAGTSCWGLI). Topologically, residues 381–394 (HVAVASRMTASVGS) are cytoplasmic. A helical membrane pass occupies residues 395 to 415 (IQNFASFICASFAPIITGFIV). Residues 416-422 (DTTHSFR) lie on the Periplasmic side of the membrane. Residues 423–443 (LALIICGCVTAAGALAYIFLV) traverse the membrane as a helical segment. The Cytoplasmic segment spans residues 444–453 (RQPINDPRKD).

Belongs to the major facilitator superfamily. Phthalate permease family.

It is found in the cell inner membrane. The catalysed reaction is L-galactonate(in) + H(+)(in) = L-galactonate(out) + H(+)(out). In terms of biological role, probably responsible for the transport of L-galactonate from the periplasm across the inner membrane. Is essential for growth on L-galactonate as the sole carbon source. The sequence is that of Probable L-galactonate transporter (lgoT) from Escherichia coli (strain K12).